A 652-amino-acid chain; its full sequence is Acetyl-coenzyme A synthetase (652 aa).

CoA contacts are provided by residues 191–194 (RAGR), Thr-311, and Asn-335. Residues 387-389 (GEP), 411-416 (DTWWQT), Asp-500, and Arg-515 each bind ATP. Ser-523 provides a ligand contact to CoA. Residue Arg-526 coordinates ATP. The Mg(2+) site is built by Val-537, His-539, and Ile-542. Arg-584 lines the CoA pocket. The residue at position 609 (Lys-609) is an N6-acetyllysine.

Belongs to the ATP-dependent AMP-binding enzyme family. Requires Mg(2+) as cofactor. Acetylated. Deacetylation by the SIR2-homolog deacetylase activates the enzyme.

The enzyme catalyses acetate + ATP + CoA = acetyl-CoA + AMP + diphosphate. Its function is as follows. Catalyzes the conversion of acetate into acetyl-CoA (AcCoA), an essential intermediate at the junction of anabolic and catabolic pathways. Acs undergoes a two-step reaction. In the first half reaction, Acs combines acetate with ATP to form acetyl-adenylate (AcAMP) intermediate. In the second half reaction, it can then transfer the acetyl group from AcAMP to the sulfhydryl group of CoA, forming the product AcCoA. Enables the cell to use acetate during aerobic growth to generate energy via the TCA cycle, and biosynthetic compounds via the glyoxylate shunt. Acetylates CheY, the response regulator involved in flagellar movement and chemotaxis. This chain is Acetyl-coenzyme A synthetase, found in Escherichia coli O6:H1 (strain CFT073 / ATCC 700928 / UPEC).